The primary structure comprises 129 residues: Phosphoribosyl-AMP cyclohydrolase (129 aa).

Mg(2+) is bound at residue Asp76. A Zn(2+)-binding site is contributed by Cys77. Mg(2+)-binding residues include Asp78 and Asp80. Residues Cys97 and Cys104 each coordinate Zn(2+).

This sequence belongs to the PRA-CH family. In terms of assembly, homodimer. The cofactor is Mg(2+). Requires Zn(2+) as cofactor.

Its subcellular location is the cytoplasm. The enzyme catalyses 1-(5-phospho-beta-D-ribosyl)-5'-AMP + H2O = 1-(5-phospho-beta-D-ribosyl)-5-[(5-phospho-beta-D-ribosylamino)methylideneamino]imidazole-4-carboxamide. It participates in amino-acid biosynthesis; L-histidine biosynthesis; L-histidine from 5-phospho-alpha-D-ribose 1-diphosphate: step 3/9. Catalyzes the hydrolysis of the adenine ring of phosphoribosyl-AMP. In Polaromonas sp. (strain JS666 / ATCC BAA-500), this protein is Phosphoribosyl-AMP cyclohydrolase.